Here is a 33-residue protein sequence, read N- to C-terminus: Cecropin-B (33 aa).

5-hydroxylysine is present on Lys-21.

In terms of assembly, monomer. Hemolymph.

It localises to the secreted. In terms of biological role, cecropins have lytic and antibacterial activity against several Gram-positive and Gram-negative bacteria. Also has activity against fungi. The sequence is that of Cecropin-B from Heliothis virescens (Tobacco budworm moth).